The sequence spans 122 residues: Large ribosomal subunit protein uL14 (122 aa).

The protein belongs to the universal ribosomal protein uL14 family. In terms of assembly, part of the 50S ribosomal subunit. Forms a cluster with proteins L3 and L19. In the 70S ribosome, L14 and L19 interact and together make contacts with the 16S rRNA in bridges B5 and B8.

Binds to 23S rRNA. Forms part of two intersubunit bridges in the 70S ribosome. The protein is Large ribosomal subunit protein uL14 of Symbiobacterium thermophilum (strain DSM 24528 / JCM 14929 / IAM 14863 / T).